Consider the following 307-residue polypeptide: Sex-lethal homolog (307 aa).

RRM domains follow at residues 85 to 163 (TNLI…YARP) and 171 to 251 (TNLY…LAEE). Positions 285–299 (HRGRHNKNRNQKPHP) are enriched in basic residues. The disordered stretch occupies residues 285-307 (HRGRHNKNRNQKPHPYHNPQKFI).

It is found in the nucleus. In terms of biological role, unknown; apparently not involved in somatic sex determination. The polypeptide is Sex-lethal homolog (SXL) (Chrysomya rufifacies (Hairy maggot blowfly)).